The primary structure comprises 562 residues: Nucleoprotein (562 aa).

The segment at 54 to 237 is binding site for the cap structure m7GTP; the sequence is LRKTKRTDGD…ITKDESAINI (184 aa). Residues Asp381 and Glu383 each coordinate Mn(2+). Positions 391, 498, 501, and 523 each coordinate Zn(2+). Residue Asp527 coordinates Mn(2+).

It belongs to the arenaviridae nucleocapsid protein family. In terms of assembly, homomultimerizes to form the nucleocapsid. Binds to viral genomic RNA. Interacts with glycoprotein G2. Interacts with protein Z; this interaction probably directs the encapsidated genome to budding sites. Interacts with protein L; this interaction does not interfere with Z-L interaction. Interacts with host IKBKE (via Protein kinase domain); the interaction inhibits IKBKE kinase activity.

The protein localises to the virion. It is found in the host cytoplasm. Encapsidates the genome, protecting it from nucleases. The encapsidated genomic RNA is termed the nucleocapsid (NC). Serves as template for viral transcription and replication. The increased presence of protein N in host cell does not seem to trigger the switch from transcription to replication as observed in other negative strain RNA viruses. Through the interaction with host IKBKE, strongly inhibits the phosphorylation and nuclear translocation of host IRF3, a protein involved in interferon activation pathway, leading to the inhibition of interferon-beta and IRF3-dependent promoters activation. Also encodes a functional 3'-5' exoribonuclease that degrades preferentially dsRNA substrates and thereby participates in the suppression of interferon induction. This chain is Nucleoprotein, found in Homo sapiens (Human).